We begin with the raw amino-acid sequence, 304 residues long: N-carbamoyl-D-amino acid hydrolase (304 aa).

One can recognise a CN hydrolase domain in the interval 5–276 (MILAVGQQGP…DEVITAAVCL (272 aa)). Active-site residues include Glu47, Lys127, and Cys172.

Homotetramer.

The enzyme catalyses an N-carbamoyl-D-amino acid + H2O + 2 H(+) = a D-alpha-amino acid + NH4(+) + CO2. Its activity is regulated as follows. The activity decreases with increasing concentration of H(2)O(2). Has 68% and 43% of activity remaining upon treatment with 0.1 and 0.2 mM H(2)O(2) for 30 minutes, respectively. Inhibited significantly by 2 mM Zn(2+), Cu(2+) and Ag(+), moderately by Co(2+), Mn(2+), Sn(2+) and Mg(2+), and only slightly by Ba(2+). Slightly activated by Fe(2+) and Ca(2+). No effect on activity by metal chelators EDTA and 8-hydroxyquinoline at 2 mM or by dithiothreitol, 2-mercaptoethanol or phenylmethanesulfonyl fluoride. Its function is as follows. Catalyzes the hydrolysis of N-carbamoyl-D-amino acids to the corresponding D-amino acids. Hydrolyzes aromatic and aliphatic N-carbamoyl-D-amino acids in vitro. Effectively hydrolyzes N-carbamoyl-D-p-hydroxyphenylglycine and N-carbamoyl-DL-p-hydroxyphenylglycine, and to a lesser extent N-carbamoyl-D-methionine. No activity for N-carbamoyl-L-amino acids, N-carbamoyl-beta-alanine or (RS)-alpha-ethyl-N-carbamoylphenylglycine in vitro. The chain is N-carbamoyl-D-amino acid hydrolase from Ensifer adhaerens (Sinorhizobium morelense).